We begin with the raw amino-acid sequence, 209 residues long: uncharacterized protein (209 aa).

2 disordered regions span residues 1–80 (MFVR…PPVE) and 164–197 (LPAGGAGEQEKEPVSRGSSRSSCSQRRPPPPGME). A compositionally biased stretch (low complexity) spans 178 to 189 (SRGSSRSSCSQR).

This is an uncharacterized protein from Homo sapiens (Human).